Consider the following 324-residue polypeptide: Olfactory receptor 8U3 (324 aa).

Topologically, residues 1–25 are extracellular; sequence MAEVNIIYVTVFILKGITNRPELQA. A helical membrane pass occupies residues 26-46; it reads PCFGVFLVIYLVTVLGNLGLI. Over 47-54 the chain is Cytoplasmic; it reads TLIKIDTR. The helical transmembrane segment at 55–75 threads the bilayer; it reads LHTPMYYFLSHLAFVDLCYSS. The Extracellular segment spans residues 76 to 99; that stretch reads AITPKMMVNFVVERNTIPFHACAT. The cysteines at positions 97 and 189 are disulfide-linked. Residues 100-120 traverse the membrane as a helical segment; that stretch reads QLGCFLTFMITECFLLASMAY. The Cytoplasmic portion of the chain corresponds to 121–139; the sequence is DCYVAICSPLHYSTLMSRR. Residues 140–160 form a helical membrane-spanning segment; sequence VCIQLVAVPYIYSFLVALFHT. Residues 161-196 lie on the Extracellular side of the membrane; the sequence is VITFRLTYCGPNLINHFYCDDLPFLALSCSDTHMKE. A helical transmembrane segment spans residues 197–217; that stretch reads ILIFAFAGFDMISSSSIVLTS. Residues 218–237 lie on the Cytoplasmic side of the membrane; that stretch reads YIFIIAAILRIRSTQGQHKA. Residues 238 to 258 form a helical membrane-spanning segment; that stretch reads ISTCGSHMVTVTIFYGTLIFM. Residues 259 to 271 lie on the Extracellular side of the membrane; sequence YLQPKSNHSLDTD. The N-linked (GlcNAc...) asparagine glycan is linked to Asn-265. The chain crosses the membrane as a helical span at residues 272-292; it reads KMASVFYTVVIPMLNPLIYSL. Residues 293 to 324 lie on the Cytoplasmic side of the membrane; sequence RNKEVKDASKKALDKGCENLQILTFLKIRKLY.

It belongs to the G-protein coupled receptor 1 family.

It localises to the cell membrane. In terms of biological role, odorant receptor. This Homo sapiens (Human) protein is Olfactory receptor 8U3.